Consider the following 201-residue polypeptide: Recombination protein RecR (201 aa).

The segment at 57–72 (CCDCRTFTEEERCTIC) adopts a C4-type zinc-finger fold. One can recognise a Toprim domain in the interval 81 to 176 (GQICVVESPA…AASRIAHGVP (96 aa)).

It belongs to the RecR family.

Functionally, may play a role in DNA repair. It seems to be involved in an RecBC-independent recombinational process of DNA repair. It may act with RecF and RecO. The sequence is that of Recombination protein RecR from Proteus mirabilis (strain HI4320).